Reading from the N-terminus, the 213-residue chain is Pyridoxine/pyridoxamine 5'-phosphate oxidase (213 aa).

Substrate-binding positions include Arg9–Tyr12 and Lys67. FMN contacts are provided by residues Arg62–Lys67, Phe77–Thr78, Arg83, Lys84, and Gln106. Substrate contacts are provided by Tyr124, Arg128, and Ser132. FMN contacts are provided by residues Gln141–Ser142 and Trp186. Arg192 to His194 contacts substrate. Position 196 (Arg196) interacts with FMN.

It belongs to the pyridoxamine 5'-phosphate oxidase family. Homodimer. The cofactor is FMN.

The catalysed reaction is pyridoxamine 5'-phosphate + O2 + H2O = pyridoxal 5'-phosphate + H2O2 + NH4(+). It catalyses the reaction pyridoxine 5'-phosphate + O2 = pyridoxal 5'-phosphate + H2O2. Its pathway is cofactor metabolism; pyridoxal 5'-phosphate salvage; pyridoxal 5'-phosphate from pyridoxamine 5'-phosphate: step 1/1. It participates in cofactor metabolism; pyridoxal 5'-phosphate salvage; pyridoxal 5'-phosphate from pyridoxine 5'-phosphate: step 1/1. Functionally, catalyzes the oxidation of either pyridoxine 5'-phosphate (PNP) or pyridoxamine 5'-phosphate (PMP) into pyridoxal 5'-phosphate (PLP). This is Pyridoxine/pyridoxamine 5'-phosphate oxidase from Cyanothece sp. (strain PCC 7425 / ATCC 29141).